A 333-amino-acid polypeptide reads, in one-letter code: Malate dehydrogenase (333 aa).

Residues 10-15 (GGGQIG) and Asp-34 contribute to the NAD(+) site. Residues Arg-83 and Arg-89 each contribute to the substrate site. NAD(+)-binding positions include Asn-96 and 119–121 (ITN). Substrate-binding residues include Asn-121 and Arg-152. The active-site Proton acceptor is His-176.

It belongs to the LDH/MDH superfamily. MDH type 3 family.

The enzyme catalyses (S)-malate + NAD(+) = oxaloacetate + NADH + H(+). Its function is as follows. Catalyzes the reversible oxidation of malate to oxaloacetate. In Parvibaculum lavamentivorans (strain DS-1 / DSM 13023 / NCIMB 13966), this protein is Malate dehydrogenase.